The following is a 310-amino-acid chain: N-acetylmuramic acid 6-phosphate etherase (310 aa).

An SIS domain is found at 64–227 (ITARLKSKGR…STSVMIKLGK (164 aa)). The active-site Proton donor is the glutamate 92. Glutamate 123 is a catalytic residue.

The protein belongs to the GCKR-like family. MurNAc-6-P etherase subfamily. In terms of assembly, homodimer.

The catalysed reaction is N-acetyl-D-muramate 6-phosphate + H2O = N-acetyl-D-glucosamine 6-phosphate + (R)-lactate. It functions in the pathway amino-sugar metabolism; N-acetylmuramate degradation. Specifically catalyzes the cleavage of the D-lactyl ether substituent of MurNAc 6-phosphate, producing GlcNAc 6-phosphate and D-lactate. The polypeptide is N-acetylmuramic acid 6-phosphate etherase (Prochlorococcus marinus (strain NATL1A)).